Consider the following 218-residue polypeptide: MDNIIVAIDGPAGSGKSTIAKLIAKKFNFTYIDTGAMYRMITLYLLENNINFDDLKEIEKALKNINLDMQGDKFYLNDVDVSTKIREKRINENVSKVASIKIVRDNLVNLQRKISNNKNVILDGRDIGTVVFPNAKVKIFLVAAAEERARRRYNEFLEKKVEITYDEVLKSLKERDYIDSTRKESPLKKADEAIELDTTNLTIEDVINFISKKIEKVK.

Position 10-18 (10-18) interacts with ATP; that stretch reads GPAGSGKST.

This sequence belongs to the cytidylate kinase family. Type 1 subfamily.

The protein localises to the cytoplasm. The enzyme catalyses CMP + ATP = CDP + ADP. The catalysed reaction is dCMP + ATP = dCDP + ADP. The sequence is that of Cytidylate kinase from Fusobacterium nucleatum subsp. nucleatum (strain ATCC 25586 / DSM 15643 / BCRC 10681 / CIP 101130 / JCM 8532 / KCTC 2640 / LMG 13131 / VPI 4355).